Reading from the N-terminus, the 201-residue chain is Small ribosomal subunit protein uS4c (201 aa).

The S4 RNA-binding domain maps to 89 to 157; the sequence is MRLDNILFRL…VQNYIASSDP (69 aa).

Belongs to the universal ribosomal protein uS4 family. Part of the 30S ribosomal subunit. Contacts protein S5. The interaction surface between S4 and S5 is involved in control of translational fidelity.

The protein resides in the plastid. It is found in the chloroplast. Functionally, one of the primary rRNA binding proteins, it binds directly to 16S rRNA where it nucleates assembly of the body of the 30S subunit. Its function is as follows. With S5 and S12 plays an important role in translational accuracy. The sequence is that of Small ribosomal subunit protein uS4c (rps4) from Hordeum vulgare (Barley).